Here is a 155-residue protein sequence, read N- to C-terminus: Ribosomal RNA large subunit methyltransferase H (155 aa).

Residues Leu72, Gly103, and 122 to 127 contribute to the S-adenosyl-L-methionine site; that span reads LSALTL.

This sequence belongs to the RNA methyltransferase RlmH family. Homodimer.

The protein resides in the cytoplasm. The enzyme catalyses pseudouridine(1915) in 23S rRNA + S-adenosyl-L-methionine = N(3)-methylpseudouridine(1915) in 23S rRNA + S-adenosyl-L-homocysteine + H(+). In terms of biological role, specifically methylates the pseudouridine at position 1915 (m3Psi1915) in 23S rRNA. The chain is Ribosomal RNA large subunit methyltransferase H from Salmonella choleraesuis (strain SC-B67).